The following is a 464-amino-acid chain: tRNA-2-methylthio-N(6)-dimethylallyladenosine synthase (464 aa).

The MTTase N-terminal domain maps to 4–119; that stretch reads RTFHIMTFGC…APQAIERLVQ (116 aa). Positions 13, 48, 82, 158, 162, and 165 each coordinate [4Fe-4S] cluster. Residues 144 to 375 form the Radical SAM core domain; sequence GEVPVSAYVN…QEVQNEYSEA (232 aa). The TRAM domain maps to 378–461; it reads QAMVGKTVMV…KHSLTGEPAG (84 aa). The interval 393–420 is disordered; it reads SPKSAAGSGTDAQNAAEESGRTASSWQG.

This sequence belongs to the methylthiotransferase family. MiaB subfamily. Monomer. The cofactor is [4Fe-4S] cluster.

The protein localises to the cytoplasm. It carries out the reaction N(6)-dimethylallyladenosine(37) in tRNA + (sulfur carrier)-SH + AH2 + 2 S-adenosyl-L-methionine = 2-methylsulfanyl-N(6)-dimethylallyladenosine(37) in tRNA + (sulfur carrier)-H + 5'-deoxyadenosine + L-methionine + A + S-adenosyl-L-homocysteine + 2 H(+). Functionally, catalyzes the methylthiolation of N6-(dimethylallyl)adenosine (i(6)A), leading to the formation of 2-methylthio-N6-(dimethylallyl)adenosine (ms(2)i(6)A) at position 37 in tRNAs that read codons beginning with uridine. The polypeptide is tRNA-2-methylthio-N(6)-dimethylallyladenosine synthase (Oleidesulfovibrio alaskensis (strain ATCC BAA-1058 / DSM 17464 / G20) (Desulfovibrio alaskensis)).